The following is a 266-amino-acid chain: Putative carbamate hydrolase RutD (266 aa).

This sequence belongs to the AB hydrolase superfamily. Hydrolase RutD family.

The catalysed reaction is carbamate + 2 H(+) = NH4(+) + CO2. Functionally, involved in pyrimidine catabolism. May facilitate the hydrolysis of carbamate, a reaction that can also occur spontaneously. The chain is Putative carbamate hydrolase RutD from Acinetobacter baylyi (strain ATCC 33305 / BD413 / ADP1).